The following is a 171-amino-acid chain: MACKSSRSLLLLATVMVSVFAAAAAAAAATDCSPGVAFPTNLLGHCRDYVLQQTCAVFTPGSKLPEWMTSAELNYPGQPYLAKLYCCQELAEIPQQCRCEALRYFMALPVPSQPVDPSTGNVGQSGLMDLPGCPREMQRDFVRLLVAPGQCNLATIHNVRYCPAVEQPLWI.

An N-terminal signal peptide occupies residues 1–24 (MACKSSRSLLLLATVMVSVFAAAA).

This sequence belongs to the protease inhibitor I6 (cereal trypsin/alpha-amylase inhibitor) family. Heterotetramer of one CMa, one CMb and two CMd chains. Five disulfide bonds, which are essential for the inhibitor activity, are probably present. As to expression, endosperm.

Its subcellular location is the secreted. Part of a complex with inhibitory activity, but CMd is inactive as a separate subunit. This is Alpha-amylase/trypsin inhibitor CMd (IAT3) from Hordeum vulgare (Barley).